The following is a 332-amino-acid chain: Anthranilate phosphoribosyltransferase (332 aa).

Residues Gly79, 82 to 83 (GD), Thr87, 89 to 92 (NIST), 107 to 115 (KHGNRSVSS), and Ser119 contribute to the 5-phospho-alpha-D-ribose 1-diphosphate site. Gly79 serves as a coordination point for anthranilate. Ser91 is a binding site for Mg(2+). Asn110 lines the anthranilate pocket. Residue Arg165 coordinates anthranilate. The Mg(2+) site is built by Asp223 and Glu224.

It belongs to the anthranilate phosphoribosyltransferase family. As to quaternary structure, homodimer. Requires Mg(2+) as cofactor.

The catalysed reaction is N-(5-phospho-beta-D-ribosyl)anthranilate + diphosphate = 5-phospho-alpha-D-ribose 1-diphosphate + anthranilate. The protein operates within amino-acid biosynthesis; L-tryptophan biosynthesis; L-tryptophan from chorismate: step 2/5. Catalyzes the transfer of the phosphoribosyl group of 5-phosphorylribose-1-pyrophosphate (PRPP) to anthranilate to yield N-(5'-phosphoribosyl)-anthranilate (PRA). The protein is Anthranilate phosphoribosyltransferase of Vibrio vulnificus (strain CMCP6).